Reading from the N-terminus, the 509-residue chain is UDP-N-acetylmuramoyl-L-alanyl-D-glutamate--2,6-diaminopimelate ligase (509 aa).

UDP-N-acetyl-alpha-D-muramoyl-L-alanyl-D-glutamate is bound at residue Ser30. ATP is bound at residue 110-116; sequence GTNGKTT. Residues 152–153, Ser179, Gln185, and Arg187 contribute to the UDP-N-acetyl-alpha-D-muramoyl-L-alanyl-D-glutamate site; that span reads TT. Lys219 bears the N6-carboxylysine mark. Meso-2,6-diaminopimelate contacts are provided by residues Arg385, 409–412, Gly476, and Glu480; that span reads DNPR. The short motif at 409–412 is the Meso-diaminopimelate recognition motif element; that stretch reads DNPR.

It belongs to the MurCDEF family. MurE subfamily. It depends on Mg(2+) as a cofactor. In terms of processing, carboxylation is probably crucial for Mg(2+) binding and, consequently, for the gamma-phosphate positioning of ATP.

It localises to the cytoplasm. It catalyses the reaction UDP-N-acetyl-alpha-D-muramoyl-L-alanyl-D-glutamate + meso-2,6-diaminopimelate + ATP = UDP-N-acetyl-alpha-D-muramoyl-L-alanyl-gamma-D-glutamyl-meso-2,6-diaminopimelate + ADP + phosphate + H(+). The protein operates within cell wall biogenesis; peptidoglycan biosynthesis. Its function is as follows. Catalyzes the addition of meso-diaminopimelic acid to the nucleotide precursor UDP-N-acetylmuramoyl-L-alanyl-D-glutamate (UMAG) in the biosynthesis of bacterial cell-wall peptidoglycan. This chain is UDP-N-acetylmuramoyl-L-alanyl-D-glutamate--2,6-diaminopimelate ligase, found in Geobacter sulfurreducens (strain ATCC 51573 / DSM 12127 / PCA).